We begin with the raw amino-acid sequence, 361 residues long: Phospho-N-acetylmuramoyl-pentapeptide-transferase (361 aa).

10 helical membrane-spanning segments follow: residues 28 to 48 (LAVLVTLSLSFLIGPRLIKFL), 74 to 94 (TMGGIMIILSSCFSTLLLADL), 99 to 119 (IWITLFGFVSFGIIGFLDDYA), 135 to 155 (LLLQGIISLIVCILLEYTIDS), 167 to 187 (SLSMDLGYLYIFFAIFVIVGA), 203 to 223 (VPIALTAGSFALISYLVGNLI), 236 to 256 (TGELTIFCASIVGSCLGFLWF), 263 to 283 (VFMGDTGSLSLGGVLGIISVI), 288 to 308 (IVLGIVGGLFVIETISVIMQV), and 338 to 358 (KVVIRFWIISLIFVLIGLSSL).

The protein belongs to the glycosyltransferase 4 family. MraY subfamily. It depends on Mg(2+) as a cofactor.

The protein localises to the cell inner membrane. It catalyses the reaction UDP-N-acetyl-alpha-D-muramoyl-L-alanyl-gamma-D-glutamyl-meso-2,6-diaminopimeloyl-D-alanyl-D-alanine + di-trans,octa-cis-undecaprenyl phosphate = di-trans,octa-cis-undecaprenyl diphospho-N-acetyl-alpha-D-muramoyl-L-alanyl-D-glutamyl-meso-2,6-diaminopimeloyl-D-alanyl-D-alanine + UMP. Its pathway is cell wall biogenesis; peptidoglycan biosynthesis. Functionally, catalyzes the initial step of the lipid cycle reactions in the biosynthesis of the cell wall peptidoglycan: transfers peptidoglycan precursor phospho-MurNAc-pentapeptide from UDP-MurNAc-pentapeptide onto the lipid carrier undecaprenyl phosphate, yielding undecaprenyl-pyrophosphoryl-MurNAc-pentapeptide, known as lipid I. This Rickettsia bellii (strain RML369-C) protein is Phospho-N-acetylmuramoyl-pentapeptide-transferase.